A 249-amino-acid polypeptide reads, in one-letter code: NADH dehydrogenase [ubiquinone] flavoprotein 2, mitochondrial (249 aa).

A mitochondrion-targeting transit peptide spans 1–32 (MFLSAALRARAAGLAAHWGKHIRNLHKTAVQN). Lys-61 is subject to N6-acetyllysine. Cys-135, Cys-140, Cys-176, and Cys-180 together coordinate [2Fe-2S] cluster. The residue at position 193 (Tyr-193) is a Phosphotyrosine; by SRC. A disordered region spans residues 213–249 (IPKPGPRSGRFSCEPAGGLTSLTEPPKGPGFGVQAGL).

The protein belongs to the complex I 24 kDa subunit family. In terms of assembly, core subunit of respiratory chain NADH dehydrogenase (Complex I) which is composed of 45 different subunits. This is a component of the flavoprotein-sulfur (FP) fragment of the enzyme. It depends on [2Fe-2S] cluster as a cofactor.

Its subcellular location is the mitochondrion inner membrane. It carries out the reaction a ubiquinone + NADH + 5 H(+)(in) = a ubiquinol + NAD(+) + 4 H(+)(out). Its function is as follows. Core subunit of the mitochondrial membrane respiratory chain NADH dehydrogenase (Complex I) which catalyzes electron transfer from NADH through the respiratory chain, using ubiquinone as an electron acceptor. Parts of the peripheral arm of the enzyme, where the electrons from NADH are accepted by flavin mononucleotide (FMN) and then passed along a chain of iron-sulfur clusters by electron tunnelling to the final acceptor ubiquinone. Contains one iron-sulfur cluster. The protein is NADH dehydrogenase [ubiquinone] flavoprotein 2, mitochondrial (NDUFV2) of Bos taurus (Bovine).